A 591-amino-acid polypeptide reads, in one-letter code: Aspartate--tRNA ligase (591 aa).

Position 173 (Glu173) interacts with L-aspartate. The tract at residues 197-200 is aspartate; it reads QLFK. An L-aspartate-binding site is contributed by Arg219. ATP is bound by residues 219 to 221 and Gln228; that span reads RDE. His448 contributes to the L-aspartate binding site. Glu482 contributes to the ATP binding site. Arg489 provides a ligand contact to L-aspartate. Residue 534 to 537 coordinates ATP; the sequence is GLDR.

The protein belongs to the class-II aminoacyl-tRNA synthetase family. Type 1 subfamily. Homodimer.

It localises to the cytoplasm. The catalysed reaction is tRNA(Asp) + L-aspartate + ATP = L-aspartyl-tRNA(Asp) + AMP + diphosphate. Catalyzes the attachment of L-aspartate to tRNA(Asp) in a two-step reaction: L-aspartate is first activated by ATP to form Asp-AMP and then transferred to the acceptor end of tRNA(Asp). In Shewanella sp. (strain MR-7), this protein is Aspartate--tRNA ligase.